The following is a 72-amino-acid chain: Translation initiation factor IF-1 (72 aa).

The S1-like domain maps to 1–72; that stretch reads MSKEEAIEVE…SRGRITYRAK (72 aa).

Belongs to the IF-1 family. As to quaternary structure, component of the 30S ribosomal translation pre-initiation complex which assembles on the 30S ribosome in the order IF-2 and IF-3, IF-1 and N-formylmethionyl-tRNA(fMet); mRNA recruitment can occur at any time during PIC assembly.

The protein localises to the cytoplasm. One of the essential components for the initiation of protein synthesis. Stabilizes the binding of IF-2 and IF-3 on the 30S subunit to which N-formylmethionyl-tRNA(fMet) subsequently binds. Helps modulate mRNA selection, yielding the 30S pre-initiation complex (PIC). Upon addition of the 50S ribosomal subunit IF-1, IF-2 and IF-3 are released leaving the mature 70S translation initiation complex. The chain is Translation initiation factor IF-1 from Geobacter metallireducens (strain ATCC 53774 / DSM 7210 / GS-15).